We begin with the raw amino-acid sequence, 294 residues long: NAD kinase (294 aa).

Catalysis depends on D74, which acts as the Proton acceptor. Residues 74 to 75 (DG), 148 to 149 (NE), H159, R176, D178, 189 to 194 (TAYSLS), and Q249 each bind NAD(+).

This sequence belongs to the NAD kinase family. A divalent metal cation serves as cofactor.

Its subcellular location is the cytoplasm. The enzyme catalyses NAD(+) + ATP = ADP + NADP(+) + H(+). In terms of biological role, involved in the regulation of the intracellular balance of NAD and NADP, and is a key enzyme in the biosynthesis of NADP. Catalyzes specifically the phosphorylation on 2'-hydroxyl of the adenosine moiety of NAD to yield NADP. This chain is NAD kinase, found in Vibrio parahaemolyticus serotype O3:K6 (strain RIMD 2210633).